A 471-amino-acid chain; its full sequence is Probable nucleoredoxin 3 (471 aa).

Thioredoxin domains are found at residues V15 to Q173 and Q179 to D334.

The protein belongs to the nucleoredoxin family.

It catalyses the reaction [protein]-dithiol + NAD(+) = [protein]-disulfide + NADH + H(+). It carries out the reaction [protein]-dithiol + NADP(+) = [protein]-disulfide + NADPH + H(+). Functionally, probable thiol-disulfide oxidoreductase that may participate in various redox reactions. The chain is Probable nucleoredoxin 3 from Oryza sativa subsp. japonica (Rice).